Reading from the N-terminus, the 282-residue chain is Pantothenate synthetase (282 aa).

Residue 30–37 coordinates ATP; that stretch reads MGYLHEGH. His37 serves as the catalytic Proton donor. A (R)-pantoate-binding site is contributed by Gln61. Position 61 (Gln61) interacts with beta-alanine. Residue 147–150 participates in ATP binding; that stretch reads GEKD. Gln153 contacts (R)-pantoate. ATP is bound by residues Ile176 and 184–187; that span reads KSSR.

The protein belongs to the pantothenate synthetase family. In terms of assembly, homodimer.

The protein resides in the cytoplasm. The enzyme catalyses (R)-pantoate + beta-alanine + ATP = (R)-pantothenate + AMP + diphosphate + H(+). The protein operates within cofactor biosynthesis; (R)-pantothenate biosynthesis; (R)-pantothenate from (R)-pantoate and beta-alanine: step 1/1. In terms of biological role, catalyzes the condensation of pantoate with beta-alanine in an ATP-dependent reaction via a pantoyl-adenylate intermediate. This chain is Pantothenate synthetase, found in Enterococcus faecalis (strain ATCC 700802 / V583).